Consider the following 637-residue polypeptide: Biosynthetic arginine decarboxylase (637 aa).

An N6-(pyridoxal phosphate)lysine modification is found at K110. I290–Y300 is a substrate binding site.

This sequence belongs to the Orn/Lys/Arg decarboxylase class-II family. SpeA subfamily. Mg(2+) is required as a cofactor. The cofactor is pyridoxal 5'-phosphate.

It carries out the reaction L-arginine + H(+) = agmatine + CO2. In terms of biological role, catalyzes the biosynthesis of agmatine from arginine. The chain is Biosynthetic arginine decarboxylase from Pseudomonas putida (strain ATCC 47054 / DSM 6125 / CFBP 8728 / NCIMB 11950 / KT2440).